We begin with the raw amino-acid sequence, 490 residues long: ATP synthase subunit beta, chloroplastic (490 aa).

169–176 (GGAGVGKT) contributes to the ATP binding site.

This sequence belongs to the ATPase alpha/beta chains family. In terms of assembly, F-type ATPases have 2 components, CF(1) - the catalytic core - and CF(0) - the membrane proton channel. CF(1) has five subunits: alpha(3), beta(3), gamma(1), delta(1), epsilon(1). CF(0) has four main subunits: a(1), b(1), b'(1) and c(9-12).

It localises to the plastid. It is found in the chloroplast thylakoid membrane. The enzyme catalyses ATP + H2O + 4 H(+)(in) = ADP + phosphate + 5 H(+)(out). Produces ATP from ADP in the presence of a proton gradient across the membrane. The catalytic sites are hosted primarily by the beta subunits. In Cyanidium caldarium (Red alga), this protein is ATP synthase subunit beta, chloroplastic.